We begin with the raw amino-acid sequence, 40 residues long: Large ribosomal subunit protein bL36 (40 aa).

It belongs to the bacterial ribosomal protein bL36 family.

The protein is Large ribosomal subunit protein bL36 of Corynebacterium aurimucosum (strain ATCC 700975 / DSM 44827 / CIP 107346 / CN-1) (Corynebacterium nigricans).